Here is a 91-residue protein sequence, read N- to C-terminus: Bombyxin C-1 (91 aa).

The signal sequence occupies residues 1–19 (MKLVMLLVVVSAMLVLGGA). The residue at position 20 (Q20) is a Pyrrolidone carboxylic acid. Cystine bridges form between C27–C76, C39–C89, and C75–C80. Residues 47 to 67 (SGSQYAGYGWPWLPPFSSSRG) constitute a propeptide, c peptide like.

Belongs to the insulin family. Heterodimer of a B chain and an A chain linked by two disulfide bonds.

The protein resides in the secreted. Its function is as follows. Brain peptide responsible for activation of prothoracic glands to produce ecdysone in insects. The polypeptide is Bombyxin C-1 (BBXC1) (Bombyx mori (Silk moth)).